Consider the following 798-residue polypeptide: Integrin beta-7 (798 aa).

Residues 1–19 (MVALPMVLVLLLVLSRGES) form the signal peptide. Topologically, residues 20 to 723 (ELDAKIPSTG…VRPQEKGADH (704 aa)) are extracellular. Positions 44 to 92 (SCQPAPSCQKCILSHPSCAWCKQLNFTASGEAEARRCARREELLARGCP) constitute a PSI domain. 7 disulfides stabilise this stretch: C51–C476, C54–C80, C64–C91, C216–C223, C271–C311, C412–C428, and C448–C474. N68 carries N-linked (GlcNAc...) asparagine glycosylation. The disordered stretch occupies residues 98–124 (EPRGQQEVLQDQPLSQGARGEGATQLA). One can recognise a VWFA domain in the interval 150–389 (YPVDLYYLMD…QLIMDAYNSL (240 aa)). The Mg(2+) site is built by S161 and S163. Ca(2+) contacts are provided by S163, D166, D167, and D198. Ca(2+) is bound by residues N254, D256, P258, and E259. A Mg(2+)-binding site is contributed by E259. N279 carries N-linked (GlcNAc...) asparagine glycosylation. The Ca(2+) site is built by D289 and E373. The N-linked (GlcNAc...) asparagine glycan is linked to N434. N-linked (GlcNAc...) asparagine glycosylation occurs at N477. Intrachain disulfides connect C478-C497, C488-C500, C502-C511, C513-C545, C527-C543, C537-C548, C550-C559, C561-C582, C566-C580, C574-C585, C587-C596, C598-C621, C605-C619, C613-C624, C626-C635, C638-C641, C645-C688, C651-C670, and C654-C666. I-EGF domains are found at residues 478–512 (CSDT…RLCE), 513–560 (CSVA…HLCE), 561–597 (CDDA…RACE), and 598–636 (CSGD…ALCD). Residue N531 is glycosylated (N-linked (GlcNAc...) asparagine). N-linked (GlcNAc...) asparagine glycosylation occurs at N590. N-linked (GlcNAc...) asparagine glycans are attached at residues N665 and N674. The helical transmembrane segment at 724–746 (TQAIVLGCVGGIVAVGLGLVLAY) threads the bilayer. The Cytoplasmic portion of the chain corresponds to 747 to 798 (RLSVEIYDRREYSRFEKEQQQLNWKQDSNPLYKSAITTTINPRFQEADSPTL). Y778 is subject to Phosphotyrosine; by Tyr-kinases.

Belongs to the integrin beta chain family. In terms of assembly, heterodimer of an alpha and a beta subunit. ITGB7/beta-7 associates with either ITGA4/alpha-4 or ITGAE/alpha-E. Integrin ITGA4/ITGB7 interacts with MADCAM1. Integrin ITGA4/ITGB7 interacts with VCAM1 and fibronectin. Interacts with FLNA (via filamin repeats 4, 9, 12, 17, 19, 21, and 23). As to quaternary structure, (Microbial infection) May interact with HIV-1 gp120. As to expression, expressed in a variety of leukocyte lines.

It is found in the cell membrane. Its function is as follows. Integrin ITGA4/ITGB7 (alpha-4/beta-7) (Peyer patches-specific homing receptor LPAM-1) is an adhesion molecule that mediates lymphocyte migration and homing to gut-associated lymphoid tissue (GALT). Integrin ITGA4/ITGB7 interacts with the cell surface adhesion molecules MADCAM1 which is normally expressed by the vascular endothelium of the gastrointestinal tract. Also interacts with VCAM1 and fibronectin, an extracellular matrix component. It recognizes one or more domains within the alternatively spliced CS-1 region of fibronectin. Interactions involve the tripeptide L-D-T in MADCAM1, and L-D-V in fibronectin. Integrin ITGAE/ITGB7 (alpha-E/beta-7, HML-1) is a receptor for E-cadherin. In terms of biological role, (Microbial infection) Binds to HIV-1 gp120, thereby allowing the virus to enter GALT, which is thought to be the major trigger of AIDS disease. Interaction would involve a tripeptide L-D-I in HIV-1 gp120. The sequence is that of Integrin beta-7 (ITGB7) from Homo sapiens (Human).